A 551-amino-acid chain; its full sequence is Nose resistant to fluoxetine protein 5 (551 aa).

Positions 1–20 (MSRNFHIFFLLVSIIQVGNS) are cleaved as a signal peptide. A disulfide bridge connects residues cysteine 151 and cysteine 232. The segment at 241-265 (EDSEQEEGNVETTVAPTPDDDNSTL) is disordered.

The protein belongs to the BPI/LBP/Plunc superfamily. BPI/LBP family. In terms of assembly, interacts with ttr-52. As to expression, expressed in the body wall muscle cells and detected at the basal surface of pharyngeal cells and basal-lateral membranes of the intestine.

It localises to the secreted. Its function is as follows. Plays a role in the uptake of a range of molecules including phosphatidylserine, lipids and xenobiotic compounds from the intestine to surrounding tissues. Possesses lipid transfer activity. Mediates transport of lipids from intestine to reproductive tract. Binds phosphatidylserine. Plays a role in efficient clearance of cell corpses by mediating phosphatidylserine appearance on phagocytic cells, thus promoting phagocytic engulfment of apoptotic cells. Vital for embryonic development. This is Nose resistant to fluoxetine protein 5 from Caenorhabditis elegans.